The following is a 955-amino-acid chain: Calsyntenin-2 (955 aa).

Positions 1-20 are cleaved as a signal peptide; the sequence is MLPGRLCWVPLLLALGVGSG. Topologically, residues 21 to 831 are extracellular; the sequence is SGGGGDSRQR…SIQHSSVVPS (811 aa). 2 Cadherin domains span residues 44 to 160 and 161 to 280; these read IETS…APTF and KEPA…MPLF. N-linked (GlcNAc...) asparagine glycans are attached at residues asparagine 56 and asparagine 98. Residues asparagine 342, asparagine 374, asparagine 716, and asparagine 729 are each glycosylated (N-linked (GlcNAc...) asparagine). A helical transmembrane segment spans residues 832 to 852; that stretch reads IATVVIIISVCMLVFVVAMGV. Over 853 to 955 the chain is Cytoplasmic; it reads YRVRIAHQHF…LEWDDSTLPY (103 aa). The disordered stretch occupies residues 887-955; it reads PMEKHEGPGH…LEWDDSTLPY (69 aa). Basic and acidic residues predominate over residues 888–898; that stretch reads MEKHEGPGHGE. Composition is skewed to acidic residues over residues 899–913 and 920–929; these read DETEGEEEEEAEEEM and DDSEEEEEEE.

The protein belongs to the calsyntenin family. Proteolytically processed under normal cellular conditions. A primary zeta-cleavage generates a large extracellular (soluble) N-terminal domain (sAlc) and a short C-terminal transmembrane fragment (CTF1). A secondary cleavage catalyzed by gamma-secretase within the transmembrane domain releases the beta-Alc-gamma chain in the extracellular milieu and produces an intracellular fragment (AlcICD). This processing is strongly suppressed in the tripartite complex formed with APBA2 and APP, which seems to prevent the association with PSEN1. As to expression, restricted to the brain.

It localises to the postsynaptic cell membrane. Its subcellular location is the endoplasmic reticulum membrane. The protein resides in the golgi apparatus membrane. It is found in the cell projection. The protein localises to the dendrite. Functionally, postsynaptic adhesion molecule that binds to presynaptic neurexins to mediate synapse formation, and which is involved in learning and memory. Promotes synapse development by acting as a cell adhesion molecule at the postsynaptic membrane, which associates with neurexin-alpha at the presynaptic membrane. This chain is Calsyntenin-2, found in Homo sapiens (Human).